We begin with the raw amino-acid sequence, 89 residues long: Gallinacin-13 (89 aa).

An N-terminal signal peptide occupies residues 1–23 (MRILQLLFAIVVILLLQDAPARG). 3 disulfides stabilise this stretch: C30–C58, C37–C51, and C41–C59. The disordered stretch occupies residues 66–89 (PFSNPKHSVLHTAEQDPSPSLGGT).

Belongs to the beta-defensin family. In terms of tissue distribution, expressed in the liver, gall bladder, kidney, small intestine, spleen, testis, ovary and male and female reproductive tracts. Not detected in the ovarian stroma and the theca and granulosa layers of the ovarian follicle.

Its subcellular location is the secreted. It localises to the cytoplasmic granule. Has bactericidal activity. Potent activity against E.coli, L.monocytogenes, S.typhimurium and S.pyogenes but mot against S.aureus. Functionally, has bactericidal activity. This Gallus gallus (Chicken) protein is Gallinacin-13 (GAL13).